Consider the following 97-residue polypeptide: MICOS complex subunit MIC12 (97 aa).

Residues 7-24 (LTSITAVSSTLAASYYFY) form a helical membrane-spanning segment.

This sequence belongs to the MICOS complex subunit Mic12 family. As to quaternary structure, component of the mitochondrial contact site and cristae organizing system (MICOS) complex.

The protein resides in the mitochondrion inner membrane. Functionally, component of the MICOS complex, a large protein complex of the mitochondrial inner membrane that plays crucial roles in the maintenance of crista junctions, inner membrane architecture, and formation of contact sites to the outer membrane. The protein is MICOS complex subunit MIC12 (AIM5) of Zygosaccharomyces rouxii (strain ATCC 2623 / CBS 732 / NBRC 1130 / NCYC 568 / NRRL Y-229).